Consider the following 330-residue polypeptide: MTDLSEKVRAWGRRLLVGAAAAVTLPGLIGLAGGAATANAFSRPGLPVEYLQVPSAGMGRDIKVQFQSGGNGSPAVYLLDGLRAQDDYNGWDINTPAFEWYYQSGLSVIMPVGGQSSFYADWYQPACGKAGCSTYKWETFLTSELPSYLASNKGVKRTGNAAVGISMSGSSAMILAVNHPDQFIYAGSLSALLDPSQGMGPSLIGLAMGDAGGYKADAMWGPSSDPAWQRNDPSLHIPELVGHNTRLWLYCGNGTPSELGGANMPAEFLENFVRSSNLKFQDAYNGAGGHNAVFNFNANGTHSWEYWGAQLNAMKPDLQGTLGASPGGGG.

The N-terminal stretch at 1–40 (MTDLSEKVRAWGRRLLVGAAAAVTLPGLIGLAGGAATANA) is a signal peptide. Residue 82–83 (LR) participates in substrate binding. The tract at residues 98–108 (FEWYYQSGLSV) is fibronectin-binding. Residues cysteine 127 and cysteine 132 are joined by a disulfide bond. Residues serine 166 and aspartate 194 each coordinate substrate. Serine 166 acts as the Nucleophile in catalysis. Glutamate 270 is an active-site residue. Residues 272-275 (FVRS), lysine 279, and 302-304 (HSW) contribute to the substrate site. The active site involves histidine 302.

Belongs to the mycobacterial A85 antigen family.

Its subcellular location is the secreted. The catalysed reaction is 2 alpha,alpha'-trehalose 6-mycolate = alpha,alpha'-trehalose 6,6'-bismycolate + alpha,alpha-trehalose. It catalyses the reaction an acyl-CoA + a 1,2-diacyl-sn-glycerol = a triacyl-sn-glycerol + CoA. In terms of biological role, the antigen 85 proteins (FbpA, FbpB, FbpC) are responsible for the high affinity of mycobacteria for fibronectin, a large adhesive glycoprotein, which facilitates the attachment of M.tuberculosis to murine alveolar macrophages (AMs). They also help to maintain the integrity of the cell wall by catalyzing the transfer of mycolic acids to cell wall arabinogalactan and through the synthesis of alpha,alpha-trehalose dimycolate (TDM, cord factor). They catalyze the transfer of a mycoloyl residue from one molecule of alpha,alpha-trehalose monomycolate (TMM) to another TMM, leading to the formation of TDM. In Mycobacterium avium, this protein is Diacylglycerol acyltransferase/mycolyltransferase Ag85B (fbpB).